We begin with the raw amino-acid sequence, 192 residues long: Xanthine phosphoribosyltransferase 2 (192 aa).

2 residues coordinate xanthine: leucine 20 and asparagine 27. 131–135 (ANACA) serves as a coordination point for 5-phospho-alpha-D-ribose 1-diphosphate. Position 159 (lysine 159) interacts with xanthine.

The protein belongs to the purine/pyrimidine phosphoribosyltransferase family. Xpt subfamily. In terms of assembly, homodimer.

The protein resides in the cytoplasm. The catalysed reaction is XMP + diphosphate = xanthine + 5-phospho-alpha-D-ribose 1-diphosphate. Its pathway is purine metabolism; XMP biosynthesis via salvage pathway; XMP from xanthine: step 1/1. Functionally, converts the preformed base xanthine, a product of nucleic acid breakdown, to xanthosine 5'-monophosphate (XMP), so it can be reused for RNA or DNA synthesis. This chain is Xanthine phosphoribosyltransferase 2, found in Clostridium perfringens (strain ATCC 13124 / DSM 756 / JCM 1290 / NCIMB 6125 / NCTC 8237 / Type A).